The chain runs to 721 residues: MGRLLLLAGLVLLMKHSDGTAYKLVCYFTNWAHSRPGPASIMPHDLDPFLCTHLIFAFASMSNNQIVAKNLQDENVLYPEFNKLKERNRELKTLLSIGGWNFGTSRFTAMLSTLANREKFIDSVISFLRIHGFDGLDLFFLYPGLRGSPPHDRWNFLFLIEELQFAFEREALLTQHPRLLLSAAVSGIPSIIHTSYDALLLGRRLDFINVLSYDLHGSWEKFTGHNSPLFSLPEDSKSSAYAMNYWRKLGTPADKLIMGFPTYGRNFYLLKESKNGLQTASMGPASPGKYTKQAGFLAYYEVCSFVQRAKKHWIDYQYVPYAFKGKEWLGYDDTISFSYKAMYVKREHFGGAMVWTLDMDDVRGTFCGNGPFPLVHILNELLVQTESNSTPLPQFWFTSSVNASGPGSENTALTEVLTTDTIKILPPGGEAMTTEVHRRYENMTTVPSDGSVTPGGTASPRKHAVTPENNTMAAEAKTMSTLDFFSKTTTGVSKTTTGISKTTTGVSKTTTGVSKATAGISKTIPEISKATAGVSKTTTGVSKTTTGISKTITGVSKTTTGISKTTTGISKTTTGVSKITTGVSKTTTGISKTTTGISQTTTGISKTTTDISKTTTGISKTTPGISKTTPGMTVIVQTQANEAETTATMDHQSVTPTEMDTTLFYLKTMTPSEKETSRKKTMVLEKATVSPREMSATPNGQSKTLKWASLITEVETYSQDG.

Positions 1–21 (MGRLLLLAGLVLLMKHSDGTA) are cleaved as a signal peptide. The region spanning 22–385 (YKLVCYFTNW…HILNELLVQT (364 aa)) is the GH18 domain. C26 and C51 are joined by a disulfide. Chitin contacts are provided by residues 71–72 (LQ), 98–101 (GGWN), Y142, 211–214 (LSYD), and W355. Residues N402 and N442 are each glycosylated (N-linked (GlcNAc...) asparagine). A compositionally biased stretch (polar residues) spans 444-456 (TTVPSDGSVTPGG). Positions 444 to 465 (TTVPSDGSVTPGGTASPRKHAV) are disordered. The N-linked (GlcNAc...) asparagine glycan is linked to N469. A run of 21 repeats spans residues 486–492 (SKTTTGV), 493–499 (SKTTTGI), 500–506 (SKTTTGV), 507–513 (SKTTTGV), 514–520 (SKATAGI), 521–527 (SKTIPEI), 528–534 (SKATAGV), 535–541 (SKTTTGV), 542–548 (SKTTTGI), 549–555 (SKTITGV), 556–562 (SKTTTGI), 563–569 (SKTTTGI), 570–576 (SKTTTGV), 577–583 (SKITTGV), 584–590 (SKTTTGI), 591–597 (SKTTTGI), 598–604 (SQTTTGI), 605–611 (SKTTTDI), 612–618 (SKTTTGI), 619–625 (SKTTPGI), and 626–632 (SKTTPGM). Residues 486–632 (SKTTTGVSKT…PGISKTTPGM (147 aa)) are 21 X 7 AA tandem repeats of S-K-[TAI]-[TI]-[TAP]-[GED]-[IVM].

It belongs to the glycosyl hydrolase 18 family. In terms of tissue distribution, epithelial cells of the oviduct.

It localises to the cytoplasmic vesicle. The protein localises to the secretory vesicle. In terms of biological role, binds to oocyte zona pellucida in vivo. May play a role in the fertilization process and/or early embryonic development. This is Oviduct-specific glycoprotein (Ovgp1) from Mus musculus (Mouse).